Here is a 262-residue protein sequence, read N- to C-terminus: Ubiquinone biosynthesis protein COQ4, mitochondrial (262 aa).

Zn(2+) is bound by residues histidine 154, aspartate 155, histidine 158, and glutamate 170. Positions 243-262 are disordered; it reads LGIEQPPDLRQMKKDMAKKK. The span at 252 to 262 shows a compositional bias: basic and acidic residues; that stretch reads RQMKKDMAKKK.

It belongs to the COQ4 family. In terms of assembly, component of a multi-subunit COQ enzyme complex, composed of at least COQ3, COQ4, COQ5, COQ6, COQ7 and COQ9. Zn(2+) serves as cofactor.

The protein localises to the mitochondrion inner membrane. The catalysed reaction is a 4-hydroxy-3-methoxy-5-(all-trans-polyprenyl)benzoate + H(+) = a 2-methoxy-6-(all-trans-polyprenyl)phenol + CO2. It functions in the pathway cofactor biosynthesis; ubiquinone biosynthesis. Functionally, lyase that catalyzes the C1-decarboxylation of 4-hydroxy-3-methoxy-5-(all-trans-polyprenyl)benzoic acid into 2-methoxy-6-(all-trans-polyprenyl)phenol during ubiquinone biosynthesis. In Yarrowia lipolytica (strain CLIB 122 / E 150) (Yeast), this protein is Ubiquinone biosynthesis protein COQ4, mitochondrial.